Reading from the N-terminus, the 465-residue chain is Mothers against decapentaplegic homolog 1 (465 aa).

An N-acetylmethionine modification is found at Met-1. One can recognise an MH1 domain in the interval 12-136 (PAVKRLLGWK…YKRVESPVLP (125 aa)). 4 residues coordinate Zn(2+): Cys-64, Cys-109, Cys-121, and His-126. A disordered region spans residues 162 to 246 (NEPHMPLNAT…DGSQPMDTNM (85 aa)). Low complexity predominate over residues 179–212 (PNSHPFPHSPNSSYPNSPGGSSSTYPHSPTSSDP). The segment covering 221 to 232 (DTPPPAYLPPED) has biased composition (pro residues). The MH2 domain occupies 271 to 465 (WCSIVYYELN…SPHNPISSVS (195 aa)). Position 322 is a phosphothreonine; by MINK1, TNIK and MAP4K4 (Thr-322). Positions 418–428 (KGWGAEYHRQD) are L3 loop. 2 positions are modified to phosphoserine: Ser-463 and Ser-465.

Belongs to the dwarfin/SMAD family. As to quaternary structure, found in a complex with SMAD4 and YY1. Interacts with HGS, NANOG and ZCCHC12. Upon C-terminus phosphorylation: forms trimers with another SMAD1 and the co-SMAD SMAD4. Interacts with PEBP2-alpha subunit, CREB-binding protein (CBP), p300, SMURF1, SMURF2, USP15 and HOXC8. Associates with ZNF423 or ZNF521 in response to BMP2 leading to activate transcription of BMP target genes. Interacts with SKOR1. Interacts (via MH2 domain) with LEMD3. Binding to LEMD3 results in at least a partial reduction of receptor-mediated phosphorylation. Forms a ternary complex with PSMB4 and OAZ1 before PSMB4 is incorporated into the 20S proteasome. Interacts (via MH2 domain) with FAM83G (via MH2 domain); in a SMAD4-independent manner. Interacts with ZC3H3. Interacts with TMEM119. Interacts (via MH1 and MH2 domains) with ZNF8. Interacts with RANBP3L; the interaction increases when SMAD1 is not phosphorylated and mediates SMAD1 nuclear export. Interacts with EGR1; this interaction inhibits SMAD1 dephosphorylation. Interacts with SMAD6. Interacts with YAP1. Interacts with MTMR4; negatively regulates BMP signaling through SMAD1 dephosphorylation and retention in endosomes. In terms of processing, phosphorylation of the C-terminal SVS motif by BMP type 1 receptor kinase activates SMAD1 by promoting dissociation from the receptor and trimerization with SMAD4. Phosphorylation by ERK2 MAP kinase in response to EGF or HGF prevents SMAD1 nuclear accumulation and transcriptional activity in response to BMP. Dephosphorylation, probably by PPM1A, induces its export from the nucleus to the cytoplasm. Dephosphorylation is inhibited by association with EGR1. Phosphorylation by CDK8/9 creates binding sites for YAP1, and subsequent phosphorylation by GSK3 switches off YAP1 binding and adds binding sites for SMURF1. Post-translationally, ubiquitinated by SMAD-specific E3 ubiquitin ligase SMURF1, leading to its degradation. Monoubiquitinated, leading to prevent DNA-binding. Deubiquitination by USP15 alleviates inhibition and promotes activation of TGF-beta target genes. Dephosphorylation, probably by PPM1A, induces its export from the nucleus to the cytoplasm. Phospho-SMAD1 is ubiquitinated by CHIP leading to disruption of the SMAD1-SMAD4 complex. In terms of tissue distribution, ubiquitous.

It is found in the cytoplasm. The protein localises to the nucleus. Its function is as follows. Transcriptional modulator that plays a role in various cellular processes, including embryonic development, cell differentiation, and tissue homeostasis. Upon BMP ligand binding to their receptors at the cell surface, is phosphorylated by activated type I BMP receptors (BMPRIs) and associates with SMAD4 to form a heteromeric complex which translocates into the nucleus acting as transcription factor. In turn, the hetero-trimeric complex recognizes cis-regulatory elements containing Smad Binding Elements (SBEs) to modulate the outcome of the signaling network. SMAD1/OAZ1/PSMB4 complex mediates the degradation of the CREBBP/EP300 repressor SNIP1. Positively regulates BMP4-induced expression of odontogenic development regulator MSX1 following IPO7-mediated nuclear import. The sequence is that of Mothers against decapentaplegic homolog 1 (Smad1) from Mus musculus (Mouse).